The primary structure comprises 519 residues: uncharacterized protein (519 aa).

Belongs to the glycogen phosphorylase family.

This is an uncharacterized protein from Methanocaldococcus jannaschii (strain ATCC 43067 / DSM 2661 / JAL-1 / JCM 10045 / NBRC 100440) (Methanococcus jannaschii).